The following is a 268-amino-acid chain: Exopolysaccharide production negative regulator (268 aa).

Residues 1-22 (MRAGELKSLRVAVLGMSLAVGA) form the signal peptide.

In terms of biological role, negatively modulates exopolysaccharide (EPS) biosynthesis. The sequence is that of Exopolysaccharide production negative regulator (exoR) from Rhizobium meliloti (strain 1021) (Ensifer meliloti).